The sequence spans 245 residues: Orotidine 5'-phosphate decarboxylase (245 aa).

Substrate-binding positions include Asp-22, Lys-44, 71-80 (DLKFHDIPNT), Thr-131, Arg-192, Gln-201, Gly-221, and Arg-222. Lys-73 functions as the Proton donor in the catalytic mechanism.

Belongs to the OMP decarboxylase family. Type 1 subfamily. In terms of assembly, homodimer.

It catalyses the reaction orotidine 5'-phosphate + H(+) = UMP + CO2. It functions in the pathway pyrimidine metabolism; UMP biosynthesis via de novo pathway; UMP from orotate: step 2/2. Functionally, catalyzes the decarboxylation of orotidine 5'-monophosphate (OMP) to uridine 5'-monophosphate (UMP). This chain is Orotidine 5'-phosphate decarboxylase, found in Salmonella typhi.